We begin with the raw amino-acid sequence, 482 residues long: ATP-dependent rRNA helicase rrp3 (482 aa).

A disordered region spans residues 1-55; sequence MSSVKRRKTEKNTSSGLKSKQAKEPKEASPLSSPEPTEENQNNEIEEGTEEEEVT. Residues 44 to 53 are compositionally biased toward acidic residues; the sequence is EIEEGTEEEE. Residues 56 to 84 carry the Q motif motif; the sequence is KSFKDLGIVDSLCEACDTLGYKAPTPIQR. The Helicase ATP-binding domain maps to 87–258; sequence IPLALQGRDL…RASLKDPLRV (172 aa). 100 to 107 is an ATP binding site; it reads AETGSGKT. The short motif at 206 to 209 is the DEAD box element; it reads DEAD. A Helicase C-terminal domain is found at 282-430; the sequence is HKDTYLIYLL…EYQTVKDEVM (149 aa). Basic and acidic residues-rich tracts occupy residues 444 to 456 and 472 to 482; these read RNEM…DRGK and RGRDEMDREEG. Residues 444–482 form a disordered region; sequence RNEMKNLHEDRGKKGAVLKGRRPANGAKRGRDEMDREEG.

The protein belongs to the DEAD box helicase family. DDX47/RRP3 subfamily. In terms of assembly, interacts with the SSU processome.

The protein localises to the nucleus. The enzyme catalyses ATP + H2O = ADP + phosphate + H(+). ATP-dependent rRNA helicase required for pre-ribosomal RNA processing. Involved in the maturation of the 35S-pre-rRNA and to its cleavage to mature 18S rRNA. This chain is ATP-dependent rRNA helicase rrp3, found in Sclerotinia sclerotiorum (strain ATCC 18683 / 1980 / Ss-1) (White mold).